The primary structure comprises 360 residues: Phospho-N-acetylmuramoyl-pentapeptide-transferase (360 aa).

Helical transmembrane passes span 26 to 46 (AIVS…RMIA), 72 to 92 (PTMG…LWAY), 94 to 114 (SNPY…IGFV), 132 to 152 (WKYF…YLAG), 168 to 188 (VMPQ…VGTG), 199 to 219 (GLAI…AWAT), 236 to 256 (AGEL…FLWF), 263 to 283 (VFMG…IAVL), 288 to 308 (FLLV…ILQV), and 338 to 358 (VIVR…ATLK).

Belongs to the glycosyltransferase 4 family. MraY subfamily. The cofactor is Mg(2+).

The protein resides in the cell inner membrane. It carries out the reaction UDP-N-acetyl-alpha-D-muramoyl-L-alanyl-gamma-D-glutamyl-meso-2,6-diaminopimeloyl-D-alanyl-D-alanine + di-trans,octa-cis-undecaprenyl phosphate = di-trans,octa-cis-undecaprenyl diphospho-N-acetyl-alpha-D-muramoyl-L-alanyl-D-glutamyl-meso-2,6-diaminopimeloyl-D-alanyl-D-alanine + UMP. Its pathway is cell wall biogenesis; peptidoglycan biosynthesis. Functionally, catalyzes the initial step of the lipid cycle reactions in the biosynthesis of the cell wall peptidoglycan: transfers peptidoglycan precursor phospho-MurNAc-pentapeptide from UDP-MurNAc-pentapeptide onto the lipid carrier undecaprenyl phosphate, yielding undecaprenyl-pyrophosphoryl-MurNAc-pentapeptide, known as lipid I. The protein is Phospho-N-acetylmuramoyl-pentapeptide-transferase of Klebsiella pneumoniae (strain 342).